The chain runs to 367 residues: Phosphoribosylaminoimidazole-succinocarboxamide synthase (367 aa).

It belongs to the SAICAR synthetase family.

It carries out the reaction 5-amino-1-(5-phospho-D-ribosyl)imidazole-4-carboxylate + L-aspartate + ATP = (2S)-2-[5-amino-1-(5-phospho-beta-D-ribosyl)imidazole-4-carboxamido]succinate + ADP + phosphate + 2 H(+). The protein operates within purine metabolism; IMP biosynthesis via de novo pathway; 5-amino-1-(5-phospho-D-ribosyl)imidazole-4-carboxamide from 5-amino-1-(5-phospho-D-ribosyl)imidazole-4-carboxylate: step 1/2. The polypeptide is Phosphoribosylaminoimidazole-succinocarboxamide synthase (Shewanella oneidensis (strain ATCC 700550 / JCM 31522 / CIP 106686 / LMG 19005 / NCIMB 14063 / MR-1)).